The following is a 478-amino-acid chain: Cytochrome c-552 (478 aa).

The N-terminal stretch at 1–26 (MARKTLRARRFFSLIFPFFFITSVYA) is a signal peptide. Residue His-94 coordinates heme c. Heme contacts are provided by Cys-122, Cys-125, and Lys-126. Heme c-binding residues include Cys-160, Cys-163, His-164, Cys-209, Cys-212, and His-213. Positions 215, 216, 261, and 263 each coordinate Ca(2+). Tyr-216 contacts substrate. Position 264 (His-264) interacts with substrate. Residues His-275, Cys-282, Cys-285, His-286, His-301, Cys-314, Cys-317, His-318, and His-393 each contribute to the heme c site.

Belongs to the cytochrome c-552 family. Requires Ca(2+) as cofactor. Heme c serves as cofactor.

It localises to the periplasm. The catalysed reaction is 6 Fe(III)-[cytochrome c] + NH4(+) + 2 H2O = 6 Fe(II)-[cytochrome c] + nitrite + 8 H(+). Its pathway is nitrogen metabolism; nitrate reduction (assimilation). Catalyzes the reduction of nitrite to ammonia, consuming six electrons in the process. In Salmonella gallinarum (strain 287/91 / NCTC 13346), this protein is Cytochrome c-552.